The sequence spans 565 residues: DNA primase (565 aa).

The CHC2-type zinc finger occupies 37-61 (CPFHSETNPSFYVHPGLKIYHCFGC). Residues 248–329 (GFFVITEGYF…NVLVATPSPY (82 aa)) form the Toprim domain. Mg(2+)-binding residues include glutamate 254, aspartate 298, and aspartate 300.

Belongs to the DnaG primase family. In terms of assembly, monomer. Interacts with DnaB. Zn(2+) is required as a cofactor. It depends on Mg(2+) as a cofactor.

The catalysed reaction is ssDNA + n NTP = ssDNA/pppN(pN)n-1 hybrid + (n-1) diphosphate.. Its function is as follows. RNA polymerase that catalyzes the synthesis of short RNA molecules used as primers for DNA polymerase during DNA replication. The protein is DNA primase of Thermotoga maritima (strain ATCC 43589 / DSM 3109 / JCM 10099 / NBRC 100826 / MSB8).